Here is a 509-residue protein sequence, read N- to C-terminus: Maturase K (509 aa).

It belongs to the intron maturase 2 family. MatK subfamily.

It localises to the plastid. It is found in the chloroplast. Its function is as follows. Usually encoded in the trnK tRNA gene intron. Probably assists in splicing its own and other chloroplast group II introns. The chain is Maturase K from Solanum bulbocastanum (Wild potato).